A 365-amino-acid polypeptide reads, in one-letter code: PR domain zinc finger protein 12 (365 aa).

The 118-residue stretch at 86-203 (VEVIIAQSSI…PDQELLVWYG (118 aa)) folds into the SET domain. 3 consecutive C2H2-type zinc fingers follow at residues 243 to 265 (MRCV…MRIH), 271 to 293 (FVCR…VRLH), and 299 to 323 (YKCQ…SARH). Residues 318–338 (QKSARHRPPSTALQAHSPALP) are disordered. Residues 329-338 (ALQAHSPALP) are compositionally biased toward low complexity.

The protein belongs to the class V-like SAM-binding methyltransferase superfamily. In terms of assembly, interacts with EHMT2.

The protein localises to the nucleus. In terms of biological role, transcriptional regulator necessary for the development of nociceptive neurons, playing a key role in determining the nociceptive lineage from neural crest cell progenitors. Initiates neurogenesis and activates downstream pro-neuronal transcription factors, such as NEUROD1, BRN3A, and ISL1, specifically within nociceptive neurons, while repressing non-nociceptor cell fates. Essential for the proper function of nociceptors in adults, influencing both their excitability and their gene expression, thereby impacting how these neurons respond to various pain stimuli. This is PR domain zinc finger protein 12 (Prdm12) from Mus musculus (Mouse).